Consider the following 556-residue polypeptide: Putative protein SPATA31F2P (556 aa).

2 disordered regions span residues 133 to 154 and 210 to 231; these read ALKA…SGSD and LPKT…WVSP. Polar residues predominate over residues 144–154; sequence SGGQDNDSGSD.

This sequence belongs to the SPATA31 family.

In Homo sapiens (Human), this protein is Putative protein SPATA31F2P.